A 351-amino-acid chain; its full sequence is UDP-glucose 4-epimerase 5 (351 aa).

NAD(+)-binding positions include Gly13 to Ile15, Asp34 to Asn38, Asp64 to Leu65, Phe86, and Lys90. A substrate-binding site is contributed by Ser130 to Thr132. Residue Tyr154 is the Proton acceptor of the active site. Positions 158 and 182 each coordinate NAD(+). Residues Tyr182–Asn184, Asn203–Leu205, Thr221–Phe223, Arg236, and Arg298–Asp301 each bind substrate.

This sequence belongs to the NAD(P)-dependent epimerase/dehydratase family. As to quaternary structure, forms homodimers and heterodimers. NAD(+) is required as a cofactor. As to expression, widely expressed.

The enzyme catalyses UDP-alpha-D-glucose = UDP-alpha-D-galactose. It participates in carbohydrate metabolism; galactose metabolism. Enhanced activity by NaCl. Inhibited by UDP. In terms of biological role, catalyzes the interconversion between UDP-glucose and UDP-galactose. The chain is UDP-glucose 4-epimerase 5 from Arabidopsis thaliana (Mouse-ear cress).